A 428-amino-acid chain; its full sequence is Glutamate-1-semialdehyde 2,1-aminomutase (428 aa).

The residue at position 265 (lysine 265) is an N6-(pyridoxal phosphate)lysine.

The protein belongs to the class-III pyridoxal-phosphate-dependent aminotransferase family. HemL subfamily. In terms of assembly, homodimer. The cofactor is pyridoxal 5'-phosphate.

It localises to the cytoplasm. It carries out the reaction (S)-4-amino-5-oxopentanoate = 5-aminolevulinate. It participates in porphyrin-containing compound metabolism; protoporphyrin-IX biosynthesis; 5-aminolevulinate from L-glutamyl-tRNA(Glu): step 2/2. In Aeromonas hydrophila subsp. hydrophila (strain ATCC 7966 / DSM 30187 / BCRC 13018 / CCUG 14551 / JCM 1027 / KCTC 2358 / NCIMB 9240 / NCTC 8049), this protein is Glutamate-1-semialdehyde 2,1-aminomutase.